A 632-amino-acid chain; its full sequence is tRNA endonuclease VMS1 (632 aa).

The C2H2-type zinc-finger motif lies at methionine 72 to histidine 96. The tract at residues histidine 123–glutamine 155 is disordered. The VLRF1 domain occupies proline 232–leucine 392. Glutamine 295 is an active-site residue. 2 ANK repeats span residues leucine 470–isoleucine 500 and leucine 504–glutamate 530. 2 coiled-coil regions span residues leucine 544 to alanine 582 and threonine 608 to tyrosine 632. Basic and acidic residues predominate over residues lysine 578 to proline 589. The disordered stretch occupies residues lysine 578–tyrosine 632. A compositionally biased stretch (polar residues) spans asparagine 595 to threonine 608. A compositionally biased stretch (basic and acidic residues) spans aspartate 609–tyrosine 632.

It belongs to the ANKZF1/VMS1 family. As to quaternary structure, associates with 60S ribosomal subunit. Interacts with CDC48. Interacts with NPL4.

The protein resides in the cytoplasm. It localises to the mitochondrion. Its subcellular location is the endoplasmic reticulum membrane. Functionally, endonuclease that cleaves polypeptidyl-tRNAs downstream of the ribosome-associated quality control (RQC) pathway to release incompletely synthesized polypeptides for degradation. The RQC pathway disassembles aberrantly stalled translation complexes to recycle or degrade the constituent parts. VMS1 acts downstream disassembly of stalled ribosomes and specifically cleaves off the terminal 3'-CCA nucleotides universal to all tRNAs from polypeptidyl-tRNAs, releasing (1) ubiquitinated polypeptides from 60S ribosomal subunit for degradation by the ERAD pathway and (2) cleaved tRNAs for recycling. Component of an evolutionarily conserved system for ubiquitin-mediated mitochondria-associated protein degradation (MAD), which is necessary to maintain mitochondrial, cellular, and organismal viability. This chain is tRNA endonuclease VMS1, found in Saccharomyces cerevisiae (strain ATCC 204508 / S288c) (Baker's yeast).